The chain runs to 2188 residues: Phenolphthiocerol/phthiocerol polyketide synthase subunit C (2188 aa).

A Ketosynthase family 3 (KS3) domain is found at 34 to 462 (SEPIAVIGMG…GTNAHVVIEQ (429 aa)). Catalysis depends on for beta-ketoacyl synthase activity residues C210, H345, and H384. Residues 572–890 (VFVYSGRGSQ…NLNTTHTTHP (319 aa)) are acyltransferase. S660 serves as the catalytic For malonyltransferase activity. The segment at 928–1050 (HPLLGVGVTD…ATVARAEPLA (123 aa)) is N-terminal hotdog fold. Residues 928 to 1093 (HPLLGVGVTD…QQHGPAFQGI (166 aa)) are dehydratase. The 296-residue stretch at 928–1223 (HPLLGVGVTD…MAVLGSGSGA (296 aa)) folds into the PKS/mFAS DH domain. H959 (proton acceptor; for dehydratase activity) is an active-site residue. The tract at residues 1067 to 1223 (EDQLDPDDLY…MAVLGSGSGA (157 aa)) is C-terminal hotdog fold. D1129 acts as the Proton donor; for dehydratase activity in catalysis. The tract at residues 1467-1778 (GRLDALNVHE…SGKHTGKIVI (312 aa)) is enoylreductase. Positions 1802-1981 (GGYLIVGGMG…GINWGPWADV (180 aa)) are beta-ketoacyl reductase. 1803–1848 (GYLIVGGMGGLGFVVARWLAEQGAGLIVLNGRSAPSDEVAAAIAEL) is a binding site for NADP(+). The region spanning 2069 to 2145 (ERPGHLASAI…DLATALCERM (77 aa)) is the Carrier domain. O-(pantetheine 4'-phosphoryl)serine is present on S2105.

In terms of assembly, homodimer. It depends on NADP(+) as a cofactor. Pantetheine 4'-phosphate serves as cofactor.

It catalyses the reaction icosanoyl-[(phenol)carboxyphthiodiolenone synthase] + 2 (S)-methylmalonyl-CoA + 3 malonyl-CoA + 5 NADPH + 10 H(+) = C32-carboxyphthiodiolenone-[(phenol)carboxyphthiodiolenone synthase] + 5 CO2 + 5 NADP(+) + 5 CoA + 2 H2O. The catalysed reaction is docosanoyl-[(phenol)carboxyphthiodiolenone synthase] + 2 (S)-methylmalonyl-CoA + 3 malonyl-CoA + 5 NADPH + 10 H(+) = C34-carboxyphthiodiolenone-[(phenol)carboxyphthiodiolenone synthase] + 5 CO2 + 5 NADP(+) + 5 CoA + 2 H2O. The enzyme catalyses 17-(4-hydroxyphenyl)heptadecanoyl-[(phenol)carboxyphthiodiolenone synthase] + 2 (S)-methylmalonyl-CoA + 3 malonyl-CoA + 5 NADPH + 10 H(+) = C35-(phenol)carboxyphthiodiolenone-[(phenol)carboxyphthiodiolenone synthase] + 5 CO2 + 5 NADP(+) + 5 CoA + 2 H2O. It carries out the reaction 19-(4-hydroxyphenyl)nonadecanoyl-[(phenol)carboxyphthiodiolenone synthase] + 2 (S)-methylmalonyl-CoA + 3 malonyl-CoA + 5 NADPH + 10 H(+) = C37-(phenol)carboxyphthiodiolenone-[(phenol)carboxyphthiodiolenone synthase] + 5 CO2 + 5 NADP(+) + 5 CoA + 2 H2O. It functions in the pathway lipid metabolism; fatty acid biosynthesis. Its function is as follows. Part of the PpsABCDE complex involved in the biosynthesis of the lipid core common to phthiocerols and phenolphthiocerols by successive additions of malonyl-CoA or methylmalonyl-CoA extender units. PpsA can accept as substrate the activated forms of either icosanoyl (C20), docosanoyl (C22) or lignoceroyl (C24) groups from FadD26, or a (4-hydroxyphenyl)-C17 or (4-hydroxyphenyl)-C19 fatty acyl from FadD29. PpsA initiates the biosynthesis and extends its substrate using a malonyl-CoA extender unit. The PpsB and PpsC proteins add the second and third malonyl-CoA extender units. PpsD adds an (R)-methylmalonyl unit and PpsE adds a second (R)-methylmalonyl unit. The incorporation of the methylmalonyl units results in formation of two branched methyl groups in the elongated product. The sequence is that of Phenolphthiocerol/phthiocerol polyketide synthase subunit C (ppsC) from Mycobacterium bovis (strain ATCC BAA-935 / AF2122/97).